We begin with the raw amino-acid sequence, 655 residues long: MSELSDEASEPELLKRSLSMWHGLGAQGSPEELDVPLDLHTAASIGQHEVVKECVQRGELDLNKKNGGGWTALMYASYIGHDTIVHLLLEAGVSVNVPTPEGQTPLMLASSCGNESIAYFLLQQGAELEMKDIHGWTALFHCTSAGHQQMVKFLLESGANANVREPVYGYTPLMEAAASGHEIIVQYFLNHGVKVDTRDHSGATACMLARQFGHMKIVALMETHSPVLPKSLYRSPEKYEDLSSSDESWPVPQRQRPCRKKGLSIHEGPRALAKITAIGLGGKTQTTYEQVPPRGYVTFTSSDENTMESEGLCYRDVTSPINEQDVESSSSSSREEPTFCASLGPVWRSSSSDGLARAQGLSSEASIESNEDSDHARKSSVRKQTRSYLKNKSRHGNSDGHWPSSTGPASIPGSEPQTEKSPYSGPQDLATLLEQIGCLKYLQVFEEQDIDLRIFLTLTESDLKEIGITLFGPKRKMTSAIARWHSSARPPSDALELAYADRLETEMQELAIQLHKCCEEAEALRGQVSQEQELRAVVESCLLEQDSARKDIHAQLQEAQTLAQDAALVLDQLRACQAELSARLRQHHSPREGTPNPHFLSADSKGWPIPLQALSLPELSGALEDRVHEMGQALCSVTQSLEKLQMLNAKKWREP.

Residues 1-421 form an interaction with NEK7 region; the sequence is MSELSDEASE…PGSEPQTEKS (421 aa). Ser2 and Ser5 each carry phosphoserine. ANK repeat units lie at residues 34 to 64, 68 to 97, 101 to 130, 134 to 163, 168 to 197, and 201 to 220; these read DVPL…DLNK, GGWT…SVNV, EGQT…ELEM, HGWT…NANV, YGYT…KVDT, and SGAT…IVAL. Position 96 is a 3-hydroxyasparagine (Asn96). Ser201, Ser225, Ser243, Ser244, and Ser245 each carry phosphoserine. Positions 314-426 are disordered; sequence YRDVTSPINE…QTEKSPYSGP (113 aa). Thr318 is subject to Phosphothreonine. Residues Ser319, Ser366, Ser369, and Ser373 each carry the phosphoserine modification. The span at 378–395 shows a compositional bias: basic residues; sequence KSSVRKQTRSYLKNKSRH. In terms of domain architecture, SAM spans 424–487; the sequence is SGPQDLATLL…TSAIARWHSS (64 aa). Residues 500–575 are a coiled coil; that stretch reads ADRLETEMQE…AALVLDQLRA (76 aa). The residue at position 540 (Ser540) is a Phosphoserine.

As to quaternary structure, homooligomer. Interacts (via SAM domain) with ANKS6 (via SAM domain). Interacts with BICC1. Interacts with NPHP1. Interacts with NEK8. Interacts with HIF1AN. Interacts with NEK7; this interaction alters the subcellular distribution of NEK7 by preventing its nuclear translocation. In terms of processing, hydroxylated at Asn-96, most probably by HIF1AN. Post-translationally, phosphorylations at Ser-5, Ser-225, Thr-318, Ser-319, Ser-366 and Ser-369 occur in a NEK7-dependent manner. Polyubiquitinated. In terms of tissue distribution, kidney (at protein level).

It localises to the cell projection. The protein resides in the cilium. It is found in the cytoplasm. May be involved in vasopressin signaling in the kidney. This chain is Ankyrin repeat and SAM domain-containing protein 3 (Anks3), found in Mus musculus (Mouse).